Consider the following 344-residue polypeptide: GTPase Obg (344 aa).

The region spanning Met-1–Ile-159 is the Obg domain. The region spanning Ala-160 to Asp-327 is the OBG-type G domain. GTP-binding positions include Gly-166–Ser-173, Phe-191–His-195, Asp-212–Gly-215, Ser-279–Asp-282, and Ser-308–Ala-310. Mg(2+) is bound by residues Ser-173 and Thr-193.

This sequence belongs to the TRAFAC class OBG-HflX-like GTPase superfamily. OBG GTPase family. In terms of assembly, monomer. Mg(2+) is required as a cofactor.

It localises to the cytoplasm. Its function is as follows. An essential GTPase which binds GTP, GDP and possibly (p)ppGpp with moderate affinity, with high nucleotide exchange rates and a fairly low GTP hydrolysis rate. Plays a role in control of the cell cycle, stress response, ribosome biogenesis and in those bacteria that undergo differentiation, in morphogenesis control. This chain is GTPase Obg, found in Methylorubrum populi (strain ATCC BAA-705 / NCIMB 13946 / BJ001) (Methylobacterium populi).